Consider the following 758-residue polypeptide: Spastin (758 aa).

The segment at 1–99 (MVRTKNQSSS…PTTCSPRSGH (99 aa)) is disordered. Residues 1–121 (MVRTKNQSSS…KQNLYVVSFP (121 aa)) lie on the Cytoplasmic side of the membrane. The tract at residues 1 to 210 (MVRTKNQSSS…RPIQPLEMAA (210 aa)) is required for localization to punctate cytoplasmic foci. Composition is skewed to low complexity over residues 8-28 (SSSS…SSGA), 43-58 (RSSS…AGGS), 66-76 (SSNRRSPGSSP), and 85-95 (TDDLTPTTCSP). Positions 122–142 (IIFLFNVLRSLIYQLFCIFRY) form an intramembrane region, helical. Over 143 to 758 (LYGASTKVIY…WSQDYGDITI (616 aa)) the chain is Cytoplasmic. 2 stretches are compositionally biased toward polar residues: residues 169 to 180 (SKEQQQSLNHPS) and 189 to 198 (QEQQLSNQPQ). The disordered stretch occupies residues 169-203 (SKEQQQSLNHPSELSREGDGQEQQLSNQPQRFRPI). The interval 208–758 (MAANRPGGGY…WSQDYGDITI (551 aa)) is sufficient for interaction with microtubules and microtubule severing. Positions 233–308 (HRRAFEYISK…SMARDRLHFL (76 aa)) constitute an MIT domain. Disordered stretches follow at residues 353-375 (RVRS…SGRK) and 390-454 (NKSQ…ASTP). Polar residues-rich tracts occupy residues 390–406 (NKSQ…TSVG) and 425–454 (QFSS…ASTP). Positions 443 to 455 (NNGPSGSGASTPV) are required for interaction with microtubules. 523-530 (GPPGNGKT) is an ATP binding site.

It belongs to the AAA ATPase family. Spastin subfamily. Homohexamer. The homohexamer is stabilized by ATP-binding. The homohexamer may adopt a ring conformation through which microtubules pass prior to being severed. Interacts with microtubules. Interacts with atl; may be involved in microtubule dynamics.

It localises to the membrane. Its subcellular location is the cytoplasm. It is found in the cytoskeleton. The protein localises to the microtubule organizing center. The protein resides in the centrosome. It localises to the chromosome. Its subcellular location is the lipid droplet. The enzyme catalyses n ATP + n H2O + a microtubule = n ADP + n phosphate + (n+1) alpha/beta tubulin heterodimers.. Its function is as follows. ATP-dependent microtubule severing protein. Stimulates microtubule minus-end depolymerization and poleward microtubule flux in the mitotic spindle. Regulates microtubule stability in the neuromuscular junction synapse. Involved in lipid metabolism by regulating the size and distribution of lipid droplets. Involved in axon regeneration by regulating microtubule severing. The chain is Spastin from Drosophila erecta (Fruit fly).